The chain runs to 338 residues: MGAVWSALLVGGGLAGALILWLLRGDSGAPGKDGVAEPPQKGAPPGEAAAPGDGPGGGGSGGLSPEPSDRELVSKAEHLRESNGHLISESKDLGNLPEAQRLQNVGADWVNAREFVPVGKIPDTHSRADSEAARNQSPGSHGGEWRLPKGQETAVKVAGSVAAKLPSSSLLVDRAKAVSQDQAGHEDWEVVSRHSSWGSVGLGGSLEASRLSLNQRMDDSTNSLVGGRGWEVDGKVASLKPQQVSIQFQVHYTTNTDVQFIAVTGDHESLGRWNTYIPLHYCKDGLWSHSVFLPADTVVEWKFVLVENKEVTRWEECSNRFLQTGHEDKVVHGWWGIH.

Residues 1–6 (MGAVWS) are Extracellular-facing. A helical transmembrane segment spans residues 7–23 (ALLVGGGLAGALILWLL). The Cytoplasmic portion of the chain corresponds to 24–338 (RGDSGAPGKD…KVVHGWWGIH (315 aa)). Disordered regions lie at residues 30–73 (PGKD…RELV) and 120–148 (KIPDTHSRADSEAARNQSPGSHGGEWRLP). Residues 36 to 52 (AEPPQKGAPPGEAAAPG) are compositionally biased toward low complexity. The segment covering 53–62 (DGPGGGGSGG) has biased composition (gly residues). The residue at position 68 (Ser-68) is a Phosphoserine. Residues 122 to 132 (PDTHSRADSEA) are compositionally biased toward basic and acidic residues. Ser-140, Ser-167, and Ser-179 each carry phosphoserine. The LIR signature appears at 185 to 191 (HEDWEVV). 7 positions are modified to phosphoserine: Ser-195, Ser-196, Ser-205, Ser-209, Ser-212, Ser-220, and Ser-223. The 100-residue stretch at 238–337 (SLKPQQVSIQ…DKVVHGWWGI (100 aa)) folds into the CBM20 domain.

In terms of assembly, interacts with the ATG8 family proteins GABARAP and GABARAPL1. Interacts with several glycogen-associated proteins, such as GYS2 (liver glycogen synthase), GDE (glycogen debranching enzyme), GBE1 (glycogen branching enzyme 1) and EPM2A (Laforin). In terms of processing, ubiquitinated, which leads to proteasomal degradation. Expressed at high level in glycogen-accumulating organs such as muscle and liver. Trace signals are also found in brain, kidney, and pancreas.

The protein resides in the preautophagosomal structure membrane. It is found in the endoplasmic reticulum membrane. It localises to the cell membrane. The protein localises to the sarcolemma. Its subcellular location is the T-tubule. Acts as a cargo receptor for glycogen. Delivers its cargo to an autophagic pathway called glycophagy, resulting in the transport of glycogen to lysosomes. The chain is Starch-binding domain-containing protein 1 from Mus musculus (Mouse).